Here is a 309-residue protein sequence, read N- to C-terminus: Glutaminase (309 aa).

Substrate-binding residues include Ser-64, Asn-114, Glu-160, Asn-167, Tyr-191, Tyr-243, and Val-261.

This sequence belongs to the glutaminase family. Homotetramer.

The enzyme catalyses L-glutamine + H2O = L-glutamate + NH4(+). This chain is Glutaminase, found in Methylobacterium nodulans (strain LMG 21967 / CNCM I-2342 / ORS 2060).